Consider the following 540-residue polypeptide: Chaperonin GroEL (540 aa).

Residues 29-32 (TLGP), 86-90 (DGTTT), G413, 477-479 (DAL), and D493 contribute to the ATP site.

Belongs to the chaperonin (HSP60) family. In terms of assembly, forms a cylinder of 14 subunits composed of two heptameric rings stacked back-to-back. Interacts with the co-chaperonin GroES.

The protein localises to the cytoplasm. It catalyses the reaction ATP + H2O + a folded polypeptide = ADP + phosphate + an unfolded polypeptide.. Together with its co-chaperonin GroES, plays an essential role in assisting protein folding. The GroEL-GroES system forms a nano-cage that allows encapsulation of the non-native substrate proteins and provides a physical environment optimized to promote and accelerate protein folding. The chain is Chaperonin GroEL from Clostridium botulinum (strain Alaska E43 / Type E3).